Here is a 71-residue protein sequence, read N- to C-terminus: DNA-directed RNA polymerase subunit omega (71 aa).

The protein belongs to the RNA polymerase subunit omega family. The RNAP catalytic core consists of 2 alpha, 1 beta, 1 beta' and 1 omega subunit. When a sigma factor is associated with the core the holoenzyme is formed, which can initiate transcription.

The enzyme catalyses RNA(n) + a ribonucleoside 5'-triphosphate = RNA(n+1) + diphosphate. Promotes RNA polymerase assembly. Latches the N- and C-terminal regions of the beta' subunit thereby facilitating its interaction with the beta and alpha subunits. The protein is DNA-directed RNA polymerase subunit omega of Campylobacter concisus (strain 13826).